Consider the following 139-residue polypeptide: D-ribose pyranase (139 aa).

The active-site Proton donor is His-20. Residues Asp-28, His-106, and 128 to 130 (YAN) contribute to the substrate site.

It belongs to the RbsD / FucU family. RbsD subfamily. In terms of assembly, homodecamer.

The protein localises to the cytoplasm. It carries out the reaction beta-D-ribopyranose = beta-D-ribofuranose. Its pathway is carbohydrate metabolism; D-ribose degradation; D-ribose 5-phosphate from beta-D-ribopyranose: step 1/2. Functionally, catalyzes the interconversion of beta-pyran and beta-furan forms of D-ribose. The sequence is that of D-ribose pyranase from Salmonella agona (strain SL483).